The sequence spans 916 residues: Chitin synthase B (916 aa).

Disordered regions lie at residues methionine 1–histidine 84 and serine 114–leucine 141. Asparagine 18 is a glycosylation site (N-linked (GlcNAc...) asparagine). Residues arginine 60–glutamate 75 are compositionally biased toward polar residues. Asparagine 546 carries an N-linked (GlcNAc...) asparagine glycan. The next 7 helical transmembrane spans lie at methionine 572–alanine 594, isoleucine 628–alanine 648, serine 663–valine 683, isoleucine 715–leucine 735, serine 743–phenylalanine 763, leucine 845–methionine 865, and alanine 884–leucine 904.

The protein belongs to the chitin synthase family. Class III subfamily.

It localises to the cell membrane. It catalyses the reaction [(1-&gt;4)-N-acetyl-beta-D-glucosaminyl](n) + UDP-N-acetyl-alpha-D-glucosamine = [(1-&gt;4)-N-acetyl-beta-D-glucosaminyl](n+1) + UDP + H(+). Polymerizes chitin, a structural polymer of the cell wall and septum, by transferring the sugar moiety of UDP-GlcNAc to the non-reducing end of the growing chitin polymer. Involved in hyphal growth and more particularly in branching. The chain is Chitin synthase B from Aspergillus oryzae (strain ATCC 42149 / RIB 40) (Yellow koji mold).